The primary structure comprises 127 residues: Small ribosomal subunit protein uS11 (127 aa).

This sequence belongs to the universal ribosomal protein uS11 family. Part of the 30S ribosomal subunit. Interacts with proteins S7 and S18. Binds to IF-3.

Its function is as follows. Located on the platform of the 30S subunit, it bridges several disparate RNA helices of the 16S rRNA. Forms part of the Shine-Dalgarno cleft in the 70S ribosome. The protein is Small ribosomal subunit protein uS11 of Flavobacterium psychrophilum (strain ATCC 49511 / DSM 21280 / CIP 103535 / JIP02/86).